We begin with the raw amino-acid sequence, 343 residues long: Major histocompatibility complex class I-related protein 1 (343 aa).

An N-terminal signal peptide occupies residues 1-18; sequence MMFLLPFLTVFLAKQSHT. Residues 19 to 105 form an alpha-1 region; it reads RTHSLRYFRL…RHLQRHYNHS (87 aa). The antigen-binding cleft stretch occupies residues 19–197; the sequence is RTHSLRYFRL…EYGSDALERT (179 aa). The Extracellular portion of the chain corresponds to 19-298; it reads RTHSLRYFRL…QESGNTLLVA (280 aa). Positions 25 and 27 each coordinate 8-(9H-purin-6-yl)-2-oxa-8-azabicyclo[3.3.1]nona-3,6-diene-4,6-dicarbaldehyde. 5-(2-oxoethylideneamino)-6-(D-ribitylamino)uracil is bound by residues Arg27, Ser42, and Lys61. Positions 27, 42, and 61 each coordinate 5-(2-oxopropylideneamino)-6-(D-ribitylamino)uracil. 7-hydroxy-6-methyl-8-(1-D-ribityl)lumazine-binding residues include Arg27, Ser42, and Lys61. Lys61 and His76 together coordinate 8-(9H-purin-6-yl)-2-oxa-8-azabicyclo[3.3.1]nona-3,6-diene-4,6-dicarbaldehyde. Lys61 is a 2-amino-4-oxopteridine-6-carbaldehyde binding site. Lys61 is a pyridoxal binding site. Residue Asn103 is glycosylated (N-linked (GlcNAc...) asparagine). The interval 106–197 is alpha-2; sequence GLHTYQRMIG…EYGSDALERT (92 aa). Arg112 serves as a coordination point for 8-(9H-purin-6-yl)-2-oxa-8-azabicyclo[3.3.1]nona-3,6-diene-4,6-dicarbaldehyde. Residues Arg112, Tyr170, and Gln171 each coordinate 5-(2-oxoethylideneamino)-6-(D-ribitylamino)uracil. The 5-(2-oxopropylideneamino)-6-(D-ribitylamino)uracil site is built by Arg112, Tyr170, and Gln171. Positions 112, 170, and 171 each coordinate 7-hydroxy-6-methyl-8-(1-D-ribityl)lumazine. Cystine bridges form between Cys116–Cys179 and Cys218–Cys274. Residues 198 to 289 are alpha-3; that stretch reads EHPVVRTTRK…GLQMVLEAPQ (92 aa). An Ig-like C1-type domain is found at 200-302; it reads PVVRTTRKET…NTLLVANTIS (103 aa). The connecting peptide stretch occupies residues 290–298; the sequence is ESGNTLLVA. Residues 299–319 form a helical membrane-spanning segment; that stretch reads NTISGTIILIIVLAGVGALIW. Topologically, residues 320–343 are cytoplasmic; that stretch reads RRRSREPKEVMYQPTQVNEGSSPS.

Heterotrimer that consists of MR1, B2M and metabolite antigen. Major classes of metabolite ligands presented by MR1 include riboflavin-related antigens, pyrimidines and ribityl lumazines, nucleobase adducts and folate derivatives. Forms reversible covalent Schiff base complexes with microbial pyrimidine-based metabolite, which serves as a molecular switch triggering complete folding, stable association with B2M and translocation of the ternary complex from endoplasmic reticulum to the plasma membrane. Alternatively, forms non-Schiff base complexes with ribityl lumazines. On antigen-presenting cells, the ternary complex interacts with TCR on MR1-restricted T cells. Interacts with TAPBP and TAPBPL chaperones in the endoplasmic reticulum. TAPBP associated or not with MHC class I peptide loading complex binds ligand-free MR1 or MR1-B2M complex, providing for stable MR1 pools ready for metabolite antigen processing. TAPBPL interacts with MR1 in a ligand-independent way; this interaction may stabilize MR1 pool and facilitate ligand loading and dissociation. Structurally, MR1-B2M heterodimer adopts a topology similar to classical MHC class I molecules, with alpha-1 and alpha-2 domains of MR1 forming the antigen-binding cleft composed of two alpha-helices resting on a floor of 7-stranded anti-parallel beta-pleated sheet. MR1-B2M heterodimer (via alpha-helices) interacts with TCR (via CDR domains). In terms of processing, N-glycosylated. In terms of tissue distribution, expressed in kidney, liver, testis, spleen, thymus, brain, and heart.

It localises to the cell membrane. It is found in the endoplasmic reticulum membrane. The protein localises to the golgi apparatus membrane. The protein resides in the early endosome membrane. Its subcellular location is the late endosome membrane. Functionally, antigen-presenting molecule specialized in displaying microbial pyrimidine-based metabolites to alpha-beta T cell receptors (TCR) on innate-type mucosal-associated invariant T (MAIT) cells. In complex with B2M preferentially presents riboflavin-derived metabolites to semi-invariant TCRs on MAIT cells, guiding immune surveillance of the microbial metabolome at mucosal epithelial barriers. Signature pyrimidine-based microbial antigens are generated via non-enzymatic condensation of metabolite intermediates of the riboflavin pathway with by-products arising from other metabolic pathways such as glycolysis. Typical potent antigenic metabolites are 5-(2-oxoethylideneamino)-6-D-ribitylaminouracil (5-OE-RU) and 5-(2-oxopropylideneamino)-6-D-ribitylaminouracil (5-OP-RU), products of condensation of 5-amino-6-D-ribityaminouracil (5-A-RU) with glyoxal or methylglyoxal by-products, respectively. May present microbial antigens to various MAIT cell subsets, providing for unique recognition of diverse microbes, including pathogens that do not synthesize riboflavin. Upon antigen recognition, elicits rapid innate-type MAIT cell activation to eliminate pathogenic microbes by directly killing infected cells. During T cell development, drives thymic selection and post-thymic terminal differentiation of MAIT cells in a process dependent on commensal microflora. Acts as an immune sensor of cancer cell metabolome. May present a tumor-specific or -associated metabolite essential for cancer cell survival to a pan-cancer TCR on a non-MAIT CD8-positive T cell clone, triggering T cell-mediated killing of a wide range of cancer cell types. May present tumor-enriched pyridoxal and pyridoxal 5'-phosphate antigens, enabling preferential recognition of cancer cells. Presents nucleobase carbonyl adducts generated during oxidative stress. Captures M3Ade, a nucleobase adduct composed of one adenine modified by a malondialdehyde trimer, for recognition by MR1-restricted T cell clones expressing a polyclonal TCR repertoire. The sequence is that of Major histocompatibility complex class I-related protein 1 from Rattus norvegicus (Rat).